Reading from the N-terminus, the 307-residue chain is Elongation factor Ts (307 aa).

Residues Thr-80–Val-83 are involved in Mg(2+) ion dislocation from EF-Tu.

Belongs to the EF-Ts family.

Its subcellular location is the cytoplasm. Its function is as follows. Associates with the EF-Tu.GDP complex and induces the exchange of GDP to GTP. It remains bound to the aminoacyl-tRNA.EF-Tu.GTP complex up to the GTP hydrolysis stage on the ribosome. This Azorhizobium caulinodans (strain ATCC 43989 / DSM 5975 / JCM 20966 / LMG 6465 / NBRC 14845 / NCIMB 13405 / ORS 571) protein is Elongation factor Ts.